Consider the following 552-residue polypeptide: Formate--tetrahydrofolate ligase (552 aa).

Residue Thr-63–Thr-70 coordinates ATP.

This sequence belongs to the formate--tetrahydrofolate ligase family.

The enzyme catalyses (6S)-5,6,7,8-tetrahydrofolate + formate + ATP = (6R)-10-formyltetrahydrofolate + ADP + phosphate. The protein operates within one-carbon metabolism; tetrahydrofolate interconversion. This is Formate--tetrahydrofolate ligase from Caldicellulosiruptor bescii (strain ATCC BAA-1888 / DSM 6725 / KCTC 15123 / Z-1320) (Anaerocellum thermophilum).